Reading from the N-terminus, the 258-residue chain is UPF0246 protein YaaA (258 aa).

This sequence belongs to the UPF0246 family.

The polypeptide is UPF0246 protein YaaA (Escherichia coli (strain 55989 / EAEC)).